Reading from the N-terminus, the 446-residue chain is Dihydroorotate dehydrogenase (quinone), mitochondrial (446 aa).

A mitochondrion-targeting transit peptide spans 1–13 (MHSRPLPTLGRHA). The helical transmembrane segment at 40–57 (AILYTAGILGGAFAGYYL) threads the bilayer. FMN-binding positions include 125–129 (AGLDK) and serine 149. Lysine 129 lines the substrate pocket. Position 174–178 (174–178 (NRYGF)) interacts with substrate. FMN contacts are provided by asparagine 222 and asparagine 252. Residues asparagine 252 and 252 to 257 (NVSSPN) contribute to the substrate site. The Nucleophile role is filled by serine 255. FMN-binding residues include lysine 303 and serine 331. Substrate is bound at residue 332–333 (NT). FMN-binding positions include glycine 357, glycine 387, and 408–409 (YT).

It belongs to the dihydroorotate dehydrogenase family. Type 2 subfamily. It depends on FMN as a cofactor.

The protein resides in the mitochondrion inner membrane. It catalyses the reaction (S)-dihydroorotate + a quinone = orotate + a quinol. The protein operates within pyrimidine metabolism; UMP biosynthesis via de novo pathway; orotate from (S)-dihydroorotate (quinone route): step 1/1. The activity is dependent of the presence of oxygen. Functionally, catalyzes the conversion of dihydroorotate to orotate with quinone as electron acceptor. This is Dihydroorotate dehydrogenase (quinone), mitochondrial (URA9) from Lachancea kluyveri (strain ATCC 58438 / CBS 3082 / BCRC 21498 / NBRC 1685 / JCM 7257 / NCYC 543 / NRRL Y-12651) (Yeast).